The primary structure comprises 304 residues: Ribosomal RNA small subunit methyltransferase H (304 aa).

S-adenosyl-L-methionine is bound by residues 37 to 39, D57, F79, D100, and H107; that span reads GGH.

It belongs to the methyltransferase superfamily. RsmH family.

It is found in the cytoplasm. The enzyme catalyses cytidine(1402) in 16S rRNA + S-adenosyl-L-methionine = N(4)-methylcytidine(1402) in 16S rRNA + S-adenosyl-L-homocysteine + H(+). Its function is as follows. Specifically methylates the N4 position of cytidine in position 1402 (C1402) of 16S rRNA. The polypeptide is Ribosomal RNA small subunit methyltransferase H (Bacteroides fragilis (strain YCH46)).